The following is a 582-amino-acid chain: Pescadillo homolog (582 aa).

Residues 277–329 (LSALSASLARVVATVEEEENQLDNFPTEEEDQENMQAREKEQKEQEAQKRLFE) are a coiled coil. The span at 294 to 309 (EENQLDNFPTEEEDQE) shows a compositional bias: acidic residues. The interval 294–317 (EENQLDNFPTEEEDQENMQAREKE) is disordered. The region spanning 323–416 (AQKRLFEGLK…MRLPVEDYFL (94 aa)) is the BRCT domain. Residues 445-454 (ALQRGEKPVQ) show a composition bias toward basic and acidic residues. 2 disordered regions span residues 445–511 (ALQR…ETGS) and 554–582 (REVN…AKKQ). The segment covering 455–477 (EEDEEEEDEDEEEDDDVDDEEFT) has biased composition (acidic residues). Over residues 478–490 (EEKNLKKMEDTRA) the composition is skewed to basic and acidic residues. A coiled-coil region spans residues 517 to 582 (RLEQEEKAEE…QKKQKKAKKQ (66 aa)). Basic residues predominate over residues 572–582 (AQKKQKKAKKQ).

The protein belongs to the pescadillo family. Component of the PeBoW complex, composed of bop1, pes1 and wdr12. The complex is held together by bop1, which interacts with pes1 via its N-terminal domain and with wdr12 via a high-affinity interaction between the seven-bladed beta-propeller domains of the 2 proteins. The PeBoW complex associates with the 66S pre-ribosome.

The protein resides in the nucleus. Its subcellular location is the nucleolus. The protein localises to the nucleoplasm. Its function is as follows. Component of the PeBoW complex, which is required for maturation of 28S and 5.8S ribosomal RNAs and formation of the 60S ribosome. The chain is Pescadillo homolog (pes1) from Salmo salar (Atlantic salmon).